A 507-amino-acid chain; its full sequence is Maturase K (507 aa).

Belongs to the intron maturase 2 family. MatK subfamily.

Its subcellular location is the plastid. It is found in the chloroplast. Its function is as follows. Usually encoded in the trnK tRNA gene intron. Probably assists in splicing its own and other chloroplast group II introns. The polypeptide is Maturase K (Ranunculus macranthus (Large buttercup)).